A 96-amino-acid chain; its full sequence is Co-chaperonin GroES (96 aa).

Residues Leu26 to Ile48 form a disordered region.

The protein belongs to the GroES chaperonin family. Heptamer of 7 subunits arranged in a ring. Interacts with the chaperonin GroEL.

It localises to the cytoplasm. Together with the chaperonin GroEL, plays an essential role in assisting protein folding. The GroEL-GroES system forms a nano-cage that allows encapsulation of the non-native substrate proteins and provides a physical environment optimized to promote and accelerate protein folding. GroES binds to the apical surface of the GroEL ring, thereby capping the opening of the GroEL channel. This Psychrobacter arcticus (strain DSM 17307 / VKM B-2377 / 273-4) protein is Co-chaperonin GroES.